Here is a 318-residue protein sequence, read N- to C-terminus: Ribonuclease Z (318 aa).

Zn(2+)-binding residues include H62, H64, D66, H67, H144, D215, and H273. Residue D66 is the Proton acceptor of the active site.

The protein belongs to the RNase Z family. In terms of assembly, homodimer. Requires Zn(2+) as cofactor.

The catalysed reaction is Endonucleolytic cleavage of RNA, removing extra 3' nucleotides from tRNA precursor, generating 3' termini of tRNAs. A 3'-hydroxy group is left at the tRNA terminus and a 5'-phosphoryl group is left at the trailer molecule.. Its function is as follows. Zinc phosphodiesterase, which displays some tRNA 3'-processing endonuclease activity. Probably involved in tRNA maturation, by removing a 3'-trailer from precursor tRNA. This Prochlorococcus marinus (strain MIT 9303) protein is Ribonuclease Z.